The following is a 313-amino-acid chain: Hydroxyacylglutathione hydrolase, mitochondrial (313 aa).

The Zn(2+) site is built by histidine 107, histidine 109, aspartate 111, histidine 112, histidine 163, and aspartate 187. Substrate is bound by residues 196–198 (KFF) and 226–228 (HEY). Histidine 226 is a Zn(2+) binding site. 2 stretches are compositionally biased toward basic and acidic residues: residues 285-294 (VQEHAGERDP) and 301-313 (IRKE…VPKD). A disordered region spans residues 285 to 313 (VQEHAGERDPISTMGAIRKEKDHFKVPKD). A substrate-binding site is contributed by 302–305 (RKEK).

Belongs to the metallo-beta-lactamase superfamily. Glyoxalase II family. Monomer. Requires Zn(2+) as cofactor.

It is found in the mitochondrion matrix. Its subcellular location is the cytoplasm. The enzyme catalyses an S-(2-hydroxyacyl)glutathione + H2O = a 2-hydroxy carboxylate + glutathione + H(+). The catalysed reaction is (R)-S-lactoylglutathione + H2O = (R)-lactate + glutathione + H(+). Thiolesterase that catalyzes the hydrolysis of S-D-lactoyl-glutathione to form glutathione and D-lactic acid. This Xenopus tropicalis (Western clawed frog) protein is Hydroxyacylglutathione hydrolase, mitochondrial (hagh).